Here is a 148-residue protein sequence, read N- to C-terminus: MMKELFRKRSIHVCVVNTGGCNGCDIEIVACLAPRYDIEQYGIYVHNNPREADVLLVTGPVTLQWAERLKEIYEKTPEPKIVVAVGACALSGGIFKEGHVVGGVDKVIPVDAKIPGCPPRPSEIIETILKVAPKAIAMREKRLKNKDE.

Residues cysteine 21, cysteine 24, cysteine 88, and cysteine 117 each contribute to the [4Fe-4S] cluster site.

It belongs to the complex I 20 kDa subunit family. [4Fe-4S] cluster serves as cofactor.

This is an uncharacterized protein from Methanocaldococcus jannaschii (strain ATCC 43067 / DSM 2661 / JAL-1 / JCM 10045 / NBRC 100440) (Methanococcus jannaschii).